Reading from the N-terminus, the 461-residue chain is Serine carboxypeptidase-like 45 (461 aa).

The first 24 residues, methionine 1–serine 24, serve as a signal peptide directing secretion. 3 disulfides stabilise this stretch: cysteine 86–cysteine 340, cysteine 243–cysteine 261, and cysteine 286–cysteine 309. Asparagine 168 is a glycosylation site (N-linked (GlcNAc...) asparagine). Residue serine 177 is part of the active site. Residue asparagine 244 is glycosylated (N-linked (GlcNAc...) asparagine). Catalysis depends on residues aspartate 377 and histidine 434.

It belongs to the peptidase S10 family. As to expression, ubiquitous.

The protein localises to the secreted. Functionally, probable carboxypeptidase. This chain is Serine carboxypeptidase-like 45 (SCPL45), found in Arabidopsis thaliana (Mouse-ear cress).